The following is a 288-amino-acid chain: Stomatin (288 aa).

Residues 1–22 form a disordered region; it reads MAEKRHTRDSEAQRLPDSFKDS. Over 1–25 the chain is Cytoplasmic; it reads MAEKRHTRDSEAQRLPDSFKDSPSK. Phosphoserine; by PKA is present on Ser10. Ser18 is subject to Phosphoserine. Residues 26–54 lie within the membrane without spanning it; the sequence is GLGPCGWILVAFSFLFTVITFPISIWMCI. The S-palmitoyl cysteine moiety is linked to residue Cys30. Residues 55 to 288 lie on the Cytoplasmic side of the membrane; that stretch reads KIIKEYERAI…IIGAKHSHLG (234 aa). Cys87 carries the S-palmitoyl cysteine; partial lipid modification. Phosphoserine occurs at positions 161 and 244. The tract at residues 265-273 is required for homooligomerization; it reads STIVFPLPI. The tract at residues 267–269 is required for lipid raft association; it reads IVF. An interaction with LANCL1 region spans residues 273–287; it reads IDMLQGIIGAKHSHL.

This sequence belongs to the band 7/mec-2 family. In terms of assembly, homodimer and higher order homooligomer. The homodimer is banana-shaped. Interacts with ASIC1, ASIC2 and ASIC3. Interacts with LANCL1. Interacts with SLC2A1. Interacts with SLC4A1; this interaction positively regulates SLC4A1 activity. Identified in large complexes with SLC40A1, SLC14A1, SLC29A1 and AQP1. Interacts with STOML1; may redistribute STOM from the plasma membrane to late endosomes. Detected in erythrocytes (at protein level). Widely expressed.

It localises to the cell membrane. Its subcellular location is the cytoplasm. The protein resides in the cytoskeleton. The protein localises to the membrane raft. It is found in the melanosome. It localises to the cytoplasmic vesicle. Functionally, regulates ion channel activity and transmembrane ion transport. Regulates ASIC2 and ASIC3 channel activity. This is Stomatin from Homo sapiens (Human).